The chain runs to 121 residues: MKEGTGMVVRSSEITPERISNMRGGKGEVEMAHLLSKEAMHNKARLFARMKLPPGSSVGLHKHEGEFEIYYILLGEGVFHDNGKDVPIKAGDVCFTDSGESHSIENTGNTDLEFLAVIILL.

One can recognise a Cupin type-2 domain in the interval 49-117 (RMKLPPGSSV…GNTDLEFLAV (69 aa)). Positions 61, 63, and 68 each coordinate Mn(2+). Y70 serves as a coordination point for oxalate. Residue H102 coordinates Mn(2+).

Homodimer.

Functionally, binds oxalate. The sequence is that of Oxalate-binding protein from Thermotoga maritima (strain ATCC 43589 / DSM 3109 / JCM 10099 / NBRC 100826 / MSB8).